We begin with the raw amino-acid sequence, 425 residues long: Putative type I restriction enzyme MjaX specificity subunit (425 aa).

The protein belongs to the type-I restriction system S methylase family.

A putative specificity (S) subunit of a type I restriction enzyme thought to recognize 5'-TAGN(6)TGC-3'; the other subunits are unknown. This is Putative type I restriction enzyme MjaX specificity subunit from Methanocaldococcus jannaschii (strain ATCC 43067 / DSM 2661 / JAL-1 / JCM 10045 / NBRC 100440) (Methanococcus jannaschii).